Here is a 74-residue protein sequence, read N- to C-terminus: NADH dehydrogenase [ubiquinone] 1 alpha subcomplex assembly factor 8 (74 aa).

The CHCH domain maps to 22-69; the sequence is LAACGAEASAYGKCVQASTAPGGRLSKDLCVREFEALRSCFAAAAKKT. 2 short sequence motifs (cx9C motif) span residues 25-35 and 51-61; these read CGAEASAYGKC and CVREFEALRSC. Disulfide bonds link Cys-25-Cys-61 and Cys-35-Cys-51.

In terms of assembly, interacts with NDUFAF5.

The protein resides in the mitochondrion. In terms of biological role, involved in the assembly of mitochondrial NADH:ubiquinone oxidoreductase complex (complex I, MT-ND1). Required to stabilize NDUFAF5. The protein is NADH dehydrogenase [ubiquinone] 1 alpha subcomplex assembly factor 8 of Mus musculus (Mouse).